The primary structure comprises 208 residues: Thymidylate kinase (208 aa).

11–18 (GGEGVGKS) contributes to the ATP binding site.

The protein belongs to the thymidylate kinase family.

It catalyses the reaction dTMP + ATP = dTDP + ADP. Phosphorylation of dTMP to form dTDP in both de novo and salvage pathways of dTTP synthesis. The sequence is that of Thymidylate kinase from Methylococcus capsulatus (strain ATCC 33009 / NCIMB 11132 / Bath).